Here is a 1464-residue protein sequence, read N- to C-terminus: Collagen alpha-1(I) chain (1464 aa).

Residues 1 to 22 (MFSFVDLRLLLLLAATALLTHG) form the signal peptide. The propeptide at 23 to 161 (QEEGQVEGQD…PPGLGGNFAP (139 aa)) is N-terminal propeptide. Residues 38–96 (ITCVQNGLRYHDRDVWKPEPCRICVCDNGKVLCDDVICDETKNCPGAEVPEGECCPVCP) form the VWFC domain. The disordered stretch occupies residues 98–1214 (GSESPTDQET…PQEKAHDGGR (1117 aa)). The span at 138–153 (PGLPGPPGPPGPPGPP) shows a compositional bias: pro residues. Gln-162 is subject to Pyrrolidone carboxylic acid. The interval 162 to 178 (QLSYGYDEKSTGGISVP) is nonhelical region (N-terminal). Lys-170 carries the post-translational modification Allysine. A Phosphoserine modification is found at Ser-171. The segment at 179–1192 (GPMGPSGPRG…PGPPGPPGPP (1014 aa)) is triple-helical region. A 4-hydroxyproline mark is found at Pro-190, Pro-193, Pro-196, Pro-205, Pro-208, Pro-211, Pro-226, Pro-241, Pro-247, Pro-256, and Pro-262. Positions 198-217 (PQGFQGPPGEPGEPGASGPM) are enriched in low complexity. The span at 229–243 (NGDDGEAGKPGRPGE) shows a compositional bias: basic and acidic residues. The residue at position 265 (Lys-265) is a 5-hydroxylysine; alternate. Lys-265 is a glycosylation site (O-linked (Gal...) hydroxylysine; alternate). The residue at position 271 (Ser-271) is a Phosphoserine. Positions 279–295 (DAGPAGPKGEPGSPGEN) are enriched in low complexity. 4-hydroxyproline is present on residues Pro-289, Pro-292, Pro-298, Pro-307, and Pro-313. Over residues 318 to 331 (PAGARGNDGATGAA) the composition is skewed to low complexity. The span at 333–345 (PPGPTGPAGPPGF) shows a compositional bias: pro residues. A 4-hydroxyproline mark is found at Pro-334, Pro-343, Pro-346, Pro-373, Pro-376, Pro-388, Pro-394, Pro-403, Pro-409, Pro-412, and Pro-427. Residues 379–418 (AGAAGPAGNPGADGQPGAKGANGAPGIAGAPGFPGARGPS) are compositionally biased toward low complexity. Position 430 is a 5-hydroxylysine (Lys-430). A 4-hydroxyproline mark is found at Pro-436, Pro-439, Pro-451, Pro-460, Pro-475, Pro-481, Pro-490, and Pro-496. Positions 448 to 457 (KGEPGPVGVQ) are enriched in low complexity. The span at 485-494 (GERGGPGSRG) shows a compositional bias: gly residues. Residue Lys-505 is modified to 5-hydroxylysine. Residues Pro-514, Pro-523, Pro-529, Pro-535, Pro-544, Pro-547, Pro-556, Pro-565, Pro-571, Pro-583, Pro-592, Pro-601, Pro-604, Pro-622, Pro-640, Pro-646, Pro-652, Pro-658, Pro-664, Pro-670, Pro-682, Pro-691, Pro-703, Pro-715, Pro-718, Pro-724, Pro-730, and Pro-739 each carry the 4-hydroxyproline modification. The segment covering 538–564 (KGLTGSPGSPGPDGKTGPPGPAGQDGR) has biased composition (low complexity). A compositionally biased stretch (low complexity) spans 573–592 (ARGQAGVMGFPGPKGAAGEP). Residues 634 to 661 (QGPAGSPGFQGLPGPAGPPGEAGKPGEQ) are compositionally biased toward low complexity. Residues 696–724 (PRGANGAPGNDGAKGDAGAPGAPGSQGAP) are compositionally biased toward low complexity. Positions 745-747 (RGD) match the Cell attachment site motif. Lys-751 is subject to 5-hydroxylysine. 4-hydroxyproline is present on residues Pro-757, Pro-772, and Pro-778. Low complexity predominate over residues 784 to 798 (SGPSGPAGPTGARGA). Residue Ser-787 is modified to Phosphoserine. Pro-799, Pro-805, Pro-808, Pro-817, Pro-823, Pro-841, Pro-850, and Pro-859 each carry 4-hydroxyproline. Residues 811-838 (AGFAGPPGADGQPGAKGEPGDAGAKGDA) are compositionally biased toward low complexity. The span at 840–852 (PPGPAGPAGPPGP) shows a compositional bias: pro residues. Residues 853-883 (IGNVGAPGAKGARGSAGPPGATGFPGAAGRV) show a composition bias toward low complexity. The residue at position 862 (Lys-862) is a 5-hydroxylysine. 4-hydroxyproline occurs at positions 871 and 877. Position 885 is a 3-hydroxyproline (Pro-885). 16 positions are modified to 4-hydroxyproline: Pro-886, Pro-895, Pro-898, Pro-919, Pro-928, Pro-937, Pro-946, Pro-964, Pro-973, Pro-976, Pro-982, Pro-997, Pro-1003, Pro-1009, Pro-1018, and Pro-1024. Positions 912 to 921 (ETGPAGRPGE) are enriched in low complexity. Low complexity predominate over residues 931–955 (AGEKGSPGADGPAGAPGTPGPQGIA). Residues 996-1006 (PPGPMGPPGLA) are compositionally biased toward pro residues. Lys-1033 carries the 5-hydroxylysine modification. The span at 1042–1057 (AGPPGAPGAPGAPGPV) shows a compositional bias: pro residues. Pro-1045, Pro-1048, and Pro-1051 each carry 4-hydroxyproline. A compositionally biased stretch (low complexity) spans 1078-1092 (VGPVGARGPAGPQGP). The Cell attachment site signature appears at 1093-1095 (RGD). Residues 1093–1107 (RGDKGETGEQGDRGI) show a composition bias toward basic and acidic residues. At Lys-1096 the chain carries 5-hydroxylysine. Residue Lys-1108 is modified to 5-hydroxylysine; alternate. O-linked (Gal...) hydroxylysine; alternate glycosylation is present at Lys-1108. Residues Pro-1120, Pro-1123, Pro-1126, Pro-1144, and Pro-1159 each carry the 4-hydroxyproline modification. Over residues 1126-1159 (PGEQGPSGASGPAGPRGPPGSAGAPGKDGLNGLP) the composition is skewed to low complexity. A 3-hydroxyproline modification is found at Pro-1164. Pro-1165 carries the 4-hydroxyproline modification. A compositionally biased stretch (pro residues) spans 1177 to 1192 (VGPPGPPGPPGPPGPP). Pro-1179 bears the 3-hydroxyproline mark. Pro-1180 is subject to 4-hydroxyproline. Pro-1182 is modified (3-hydroxyproline). 4-hydroxyproline is present on Pro-1183. Pro-1185 is modified (3-hydroxyproline). A 4-hydroxyproline mark is found at Pro-1186, Pro-1189, and Pro-1192. Residues 1193-1218 (SAGFDFSFLPQPPQEKAHDGGRYYRA) form a nonhelical region (C-terminal) region. An Allysine modification is found at Lys-1208. Positions 1219–1464 (DDANVVRDRD…GFDVGPVCFL (246 aa)) are cleaved as a propeptide — C-terminal propeptide. The Fibrillar collagen NC1 domain occupies 1229-1464 (LEVDTTLKSL…GFDVGPVCFL (236 aa)). 3 disulfide bridges follow: Cys-1259/Cys-1291, Cys-1299/Cys-1462, and Cys-1370/Cys-1415. Ca(2+) contacts are provided by Asp-1277, Asn-1279, Gln-1280, Cys-1282, and Asp-1285. N-linked (GlcNAc...) asparagine glycosylation is present at Asn-1365.

Belongs to the fibrillar collagen family. Trimers of one alpha 2(I) and two alpha 1(I) chains. Interacts with MRC2. Interacts with TRAM2. Interacts with MFAP4 in a Ca (2+)-dependent manner. Post-translationally, contains mostly 4-hydroxyproline. Proline residues at the third position of the tripeptide repeating unit (G-X-Y) are hydroxylated in some or all of the chains. Contains 3-hydroxyproline at a few sites. This modification occurs on the first proline residue in the sequence motif Gly-Pro-Hyp, where Hyp is 4-hydroxyproline. In terms of processing, lysine residues at the third position of the tripeptide repeating unit (G-X-Y) are 5-hydroxylated in some or all of the chains. Post-translationally, O-glycosylated on hydroxylated lysine residues. The O-linked glycan consists of a Glc-Gal disaccharide. Forms the fibrils of tendon, ligaments and bones. In bones the fibrils are mineralized with calcium hydroxyapatite.

The protein resides in the secreted. Its subcellular location is the extracellular space. The protein localises to the extracellular matrix. Type I collagen is a member of group I collagen (fibrillar forming collagen). The protein is Collagen alpha-1(I) chain (COL1A1) of Homo sapiens (Human).